The following is a 218-amino-acid chain: GTP cyclohydrolase 1 (218 aa).

Zn(2+) contacts are provided by Cys-109, His-112, and Cys-180.

It belongs to the GTP cyclohydrolase I family. As to quaternary structure, toroid-shaped homodecamer, composed of two pentamers of five dimers.

It catalyses the reaction GTP + H2O = 7,8-dihydroneopterin 3'-triphosphate + formate + H(+). Its pathway is cofactor biosynthesis; 7,8-dihydroneopterin triphosphate biosynthesis; 7,8-dihydroneopterin triphosphate from GTP: step 1/1. This chain is GTP cyclohydrolase 1, found in Aeromonas hydrophila subsp. hydrophila (strain ATCC 7966 / DSM 30187 / BCRC 13018 / CCUG 14551 / JCM 1027 / KCTC 2358 / NCIMB 9240 / NCTC 8049).